The following is a 104-amino-acid chain: SOSS complex subunit C (104 aa).

The residue at position 2 (Ala2) is an N-acetylalanine. Position 50 is a phosphoserine (Ser50).

Belongs to the SOSS-C family. As to quaternary structure, component of the SOSS complex, composed of SOSS-B (SOSS-B1/NABP2 or SOSS-B2/NABP1), SOSS-A/INTS3 and SOSS-C/INIP. SOSS complexes containing SOSS-B1/NABP2 are more abundant than complexes containing SOSS-B2/NABP1. Interacts with INTS3; the interaction is direct.

The protein localises to the nucleus. Its function is as follows. Component of the SOSS complex, a multiprotein complex that functions downstream of the MRN complex to promote DNA repair and G2/M checkpoint. The SOSS complex associates with single-stranded DNA at DNA lesions and influences diverse endpoints in the cellular DNA damage response including cell-cycle checkpoint activation, recombinational repair and maintenance of genomic stability. Required for efficient homologous recombination-dependent repair of double-strand breaks (DSBs) and ATM-dependent signaling pathways. The polypeptide is SOSS complex subunit C (INIP) (Homo sapiens (Human)).